The chain runs to 254 residues: Segregation and condensation protein A (254 aa).

Belongs to the ScpA family. Component of a cohesin-like complex composed of ScpA, ScpB and the Smc homodimer, in which ScpA and ScpB bind to the head domain of Smc. The presence of the three proteins is required for the association of the complex with DNA.

It localises to the cytoplasm. Participates in chromosomal partition during cell division. May act via the formation of a condensin-like complex containing Smc and ScpB that pull DNA away from mid-cell into both cell halves. This Brevibacillus brevis (strain 47 / JCM 6285 / NBRC 100599) protein is Segregation and condensation protein A.